We begin with the raw amino-acid sequence, 49 residues long: Osteocalcin (49 aa).

Glutamine 1 carries the post-translational modification Pyrrolidone carboxylic acid. Residues 1–47 (QLINGQGAPAPYPDPLEPKREVCELNPDCDELADQVGLQDAYQRFYG) form the Gla domain. Proline 9 is modified (4-hydroxyproline). Glutamate 17, glutamate 21, glutamate 24, and aspartate 30 together coordinate Ca(2+). 4-carboxyglutamate is present on residues glutamate 17, glutamate 21, and glutamate 24. Cysteine 23 and cysteine 29 form a disulfide bridge.

Belongs to the osteocalcin/matrix Gla protein family. Gamma-carboxyglutamate residues are formed by vitamin K dependent carboxylation by GGCX. These residues are essential for the binding of calcium. Decarboxylation promotes the hormone activity.

Its subcellular location is the secreted. The carboxylated form is one of the main organic components of the bone matrix, which constitutes 1-2% of the total bone protein: it acts as a negative regulator of bone formation and is required to limit bone formation without impairing bone resorption or mineralization. The carboxylated form binds strongly to apatite and calcium. Functionally, the uncarboxylated form acts as a hormone secreted by osteoblasts, which regulates different cellular processes, such as energy metabolism, male fertility and brain development. Regulates of energy metabolism by acting as a hormone favoring pancreatic beta-cell proliferation, insulin secretion and sensitivity and energy expenditure. Uncarboxylated osteocalcin hormone also promotes testosterone production in the testes: acts as a ligand for G protein-coupled receptor GPRC6A at the surface of Leydig cells, initiating a signaling response that promotes the expression of enzymes required for testosterone synthesis in a CREB-dependent manner. Also acts as a regulator of brain development: osteocalcin hormone crosses the blood-brain barrier and acts as a ligand for GPR158 on neurons, initiating a signaling response that prevents neuronal apoptosis in the hippocampus, favors the synthesis of all monoamine neurotransmitters and inhibits that of gamma-aminobutyric acid (GABA). Osteocalcin also crosses the placenta during pregnancy and maternal osteocalcin is required for fetal brain development. This Oryctolagus cuniculus (Rabbit) protein is Osteocalcin (BGLAP).